A 127-amino-acid polypeptide reads, in one-letter code: Ribosome-binding factor A (127 aa).

This sequence belongs to the RbfA family. As to quaternary structure, monomer. Binds 30S ribosomal subunits, but not 50S ribosomal subunits or 70S ribosomes.

The protein resides in the cytoplasm. In terms of biological role, one of several proteins that assist in the late maturation steps of the functional core of the 30S ribosomal subunit. Associates with free 30S ribosomal subunits (but not with 30S subunits that are part of 70S ribosomes or polysomes). Required for efficient processing of 16S rRNA. May interact with the 5'-terminal helix region of 16S rRNA. The sequence is that of Ribosome-binding factor A from Actinobacillus pleuropneumoniae serotype 7 (strain AP76).